The chain runs to 510 residues: Global transcription regulator sge1 (510 aa).

Disordered stretches follow at residues 94 to 152 (PPGE…ASRN), 393 to 438 (HPFM…QQHS), and 469 to 510 (LGGT…MGRL). The segment covering 123–143 (NTGMNGTATGANAANLSSAGS) has biased composition (low complexity). Composition is skewed to polar residues over residues 471-480 (GTNTDQSQPF) and 501-510 (PGSNNSMGRL).

The protein belongs to the MIT1/WOR1 family.

Its subcellular location is the nucleus. Global transcriptional regulator of pathogenicity. Differentially regulates expression of effector genes. Also required for radial growth and production of asexual conidiospores, and plays a role in mycelium pigmentation. Not required for induction of Ave1, the effector that activates resistance mediated by the Ve1 immune receptor in tomato. The protein is Global transcription regulator sge1 of Verticillium dahliae (strain VdLs.17 / ATCC MYA-4575 / FGSC 10137) (Verticillium wilt).